Reading from the N-terminus, the 310-residue chain is ADP-L-glycero-D-manno-heptose-6-epimerase (310 aa).

NADP(+) contacts are provided by residues 10–11 (LI), 31–32 (DN), K38, K53, 75–79 (EGACS), and N92. The active-site Proton acceptor is Y140. K144 serves as a coordination point for NADP(+). Position 169 (N169) interacts with substrate. NADP(+) is bound by residues V170 and K178. K178 acts as the Proton acceptor in catalysis. Substrate-binding positions include S180, H187, 201 to 204 (FAGS), R209, and Y272.

Belongs to the NAD(P)-dependent epimerase/dehydratase family. HldD subfamily. As to quaternary structure, homopentamer. It depends on NADP(+) as a cofactor.

The catalysed reaction is ADP-D-glycero-beta-D-manno-heptose = ADP-L-glycero-beta-D-manno-heptose. It functions in the pathway nucleotide-sugar biosynthesis; ADP-L-glycero-beta-D-manno-heptose biosynthesis; ADP-L-glycero-beta-D-manno-heptose from D-glycero-beta-D-manno-heptose 7-phosphate: step 4/4. In terms of biological role, catalyzes the interconversion between ADP-D-glycero-beta-D-manno-heptose and ADP-L-glycero-beta-D-manno-heptose via an epimerization at carbon 6 of the heptose. The protein is ADP-L-glycero-D-manno-heptose-6-epimerase of Erwinia tasmaniensis (strain DSM 17950 / CFBP 7177 / CIP 109463 / NCPPB 4357 / Et1/99).